A 426-amino-acid polypeptide reads, in one-letter code: PI-PLC X domain-containing protein At5g67130 (426 aa).

The first 28 residues, 1 to 28 (MSACINGLCRAVTVSLLLLLLSFSFSSA), serve as a signal peptide directing secretion. Residues 76-232 (IINGLPFNKY…MVQENHRLLV (157 aa)) enclose the PI-PLC X-box domain. 2 N-linked (GlcNAc...) asparagine glycosylation sites follow: Asn-151 and Asn-255. The segment at 258–277 (GDPGVKRGSCPNRKESQPLN) is disordered. Residue Asn-370 is glycosylated (N-linked (GlcNAc...) asparagine). Ser-404 is lipidated: GPI-anchor amidated serine. Positions 405–426 (VAQLNNIVVFCFSLLPLLIFLL) are cleaved as a propeptide — removed in mature form.

The protein resides in the cell membrane. The protein is PI-PLC X domain-containing protein At5g67130 of Arabidopsis thaliana (Mouse-ear cress).